A 291-amino-acid chain; its full sequence is Protease HtpX homolog (291 aa).

Transmembrane regions (helical) follow at residues 11-31 (INTF…GLLA) and 34-54 (FLGM…ACVQ). His140 lines the Zn(2+) pocket. The active site involves Glu141. His144 is a Zn(2+) binding site. 2 consecutive transmembrane segments (helical) span residues 155–175 (IVFG…RALI) and 186–206 (AFSF…AMLV). Glu215 is a Zn(2+) binding site.

This sequence belongs to the peptidase M48B family. Zn(2+) is required as a cofactor.

Its subcellular location is the cell membrane. The protein is Protease HtpX homolog of Tropheryma whipplei (strain TW08/27) (Whipple's bacillus).